The primary structure comprises 400 residues: Phosphoglycerate kinase (400 aa).

Substrate contacts are provided by residues 24-26, arginine 40, 63-66, arginine 121, and arginine 154; these read DFN and HFGR. Residues lysine 205, glycine 296, glutamate 327, and 356–359 contribute to the ATP site; that span reads GGDS.

In terms of assembly, monomer.

The protein resides in the cytoplasm. The enzyme catalyses (2R)-3-phosphoglycerate + ATP = (2R)-3-phospho-glyceroyl phosphate + ADP. Its pathway is carbohydrate degradation; glycolysis; pyruvate from D-glyceraldehyde 3-phosphate: step 2/5. The chain is Phosphoglycerate kinase from Nostoc sp. (strain PCC 7120 / SAG 25.82 / UTEX 2576).